The sequence spans 1177 residues: Topoisomerase 1-associated factor 1 (1177 aa).

5 disordered regions span residues 332 to 353 (MDQT…GEQE), 576 to 598 (KKVA…TEDI), 802 to 830 (ALAA…SILV), 893 to 1012 (DPPT…DKDM), and 1028 to 1177 (AFGK…SDSE). Acidic residues predominate over residues 586-597 (GDEEGQVSDTED). Basic and acidic residues predominate over residues 893–908 (DPPTYEDGKGPEDLIR). The span at 923–934 (FDDDDEEAENAV) shows a compositional bias: acidic residues. Composition is skewed to basic and acidic residues over residues 935–955 (EEDH…DGER) and 975–1001 (KDRR…FVHD). Residues 1002-1011 (SDEEDDDDKD) are compositionally biased toward acidic residues. The span at 1054-1066 (RTKRRKTPPKRKA) shows a compositional bias: basic residues. Positions 1071–1080 (DSDDSDEDVQ) are enriched in acidic residues. Over residues 1129-1140 (TTGATASITVKS) the composition is skewed to polar residues. Positions 1145 to 1155 (MADDDDEEDEA) are enriched in acidic residues.

The protein belongs to the timeless family. Component of the fork protection complex (FPC) consisting of TOF1 and CSM3.

It is found in the nucleus. Functionally, forms a fork protection complex (FPC) with CSM3 and which is required for chromosome segregation during meiosis and DNA damage repair. FPC coordinates leading and lagging strand synthesis and moves with the replication fork. FPC stabilizes replication forks in a configuration that is recognized by replication checkpoint sensors. This is Topoisomerase 1-associated factor 1 (TOF1) from Phaeosphaeria nodorum (strain SN15 / ATCC MYA-4574 / FGSC 10173) (Glume blotch fungus).